A 686-amino-acid chain; its full sequence is Pentatricopeptide repeat-containing protein 1, mitochondrial (686 aa).

Residues 55–67 (RMSSLCSDSSTPV) are compositionally biased toward polar residues. The segment at 55 to 79 (RMSSLCSDSSTPVAPQEEEEEESFG) is disordered. PPR repeat units follow at residues 124–160 (TPYW…RLQP), 161–195 (LECN…DLEP), 196–234 (SDAT…NFQL), 235–269 (NLKT…GHAV), and 270–306 (TEET…GIKP). The interval 383-407 (KLEGPPAFPEARETSRTQPEVETKA) is disordered. Residues 392–407 (EARETSRTQPEVETKA) show a composition bias toward basic and acidic residues. PPR repeat units lie at residues 508–542 (DITF…GIVP) and 575–609 (NTHI…SVPV).

This sequence belongs to the PTCD1 family. As to quaternary structure, associates with mitochondrial leucine tRNAs. Interacts with ELAC2.

It localises to the mitochondrion matrix. Mitochondrial protein implicated in negative regulation of leucine tRNA levels, as well as negative regulation of mitochondria-encoded proteins and COX activity. Also affects the 3'-processing of mitochondrial tRNAs. The sequence is that of Pentatricopeptide repeat-containing protein 1, mitochondrial (Ptcd1) from Rattus norvegicus (Rat).